A 1366-amino-acid chain; its full sequence is DNA-directed RNA polymerase subunit beta (1366 aa).

This sequence belongs to the RNA polymerase beta chain family. In terms of assembly, the RNAP catalytic core consists of 2 alpha, 1 beta, 1 beta' and 1 omega subunit. When a sigma factor is associated with the core the holoenzyme is formed, which can initiate transcription.

It carries out the reaction RNA(n) + a ribonucleoside 5'-triphosphate = RNA(n+1) + diphosphate. Its function is as follows. DNA-dependent RNA polymerase catalyzes the transcription of DNA into RNA using the four ribonucleoside triphosphates as substrates. This is DNA-directed RNA polymerase subunit beta from Marinomonas sp. (strain MWYL1).